A 162-amino-acid chain; its full sequence is Ribosome maturation factor RimP (162 aa).

It belongs to the RimP family.

It localises to the cytoplasm. Required for maturation of 30S ribosomal subunits. In Ralstonia pickettii (strain 12J), this protein is Ribosome maturation factor RimP.